The sequence spans 748 residues: Ribonucleoprotein PTB-binding 1 (748 aa).

Residues 1–42 (MAADVSVTHRPPLSPEAEAEAETPETVDRRTPEQELPPLDPE) are disordered. Residue Ala2 is modified to N-acetylalanine. A phosphoserine mark is found at Ser6 and Ser14. At Thr31 the chain carries Phosphothreonine. The short motif at 45–60 (RKRLEHTERQFRNRRK) is the Nuclear localization signal element. RRM domains follow at residues 59 to 130 (RKIL…LQPT), 132 to 210 (ALLC…WTDA), and 221 to 299 (RCLC…FCAP). Positions 307-401 (LAALIAAQAT…QSQSQKKPGI (95 aa)) are interaction with PTBP1. Disordered stretches follow at residues 390 to 505 (QSQS…GEPP), 525 to 647 (SNLA…PLSH), and 672 to 731 (KAVG…QHSQ). The residue at position 469 (Thr469) is a Phosphothreonine. Residues Ser480, Ser576, Ser626, and Ser630 each carry the phosphoserine modification. A compositionally biased stretch (low complexity) spans 675–685 (GSSPMGSSEGL). Ser716 and Ser720 each carry phosphoserine. The short motif at 743 to 746 (KRKR) is the Nuclear localization signal element.

As to quaternary structure, interacts with PTBP1, RAVER2, VCL and ACTN1. Part of a complex containing RAVER1, VCL and ACTN1. As to expression, ubiquitous. Detected in aorta, brain, gut, heart, kidney, liver, spleen, uterus and skeletal muscle.

Its subcellular location is the nucleus. It is found in the cytoplasm. Functionally, cooperates with PTBP1 to modulate regulated alternative splicing events. Promotes exon skipping. Cooperates with PTBP1 to modulate switching between mutually exclusive exons during maturation of the TPM1 pre-mRNA. In Rattus norvegicus (Rat), this protein is Ribonucleoprotein PTB-binding 1 (Raver1).